Reading from the N-terminus, the 559-residue chain is Tissue-type plasminogen activator (559 aa).

Positions 1–17 are cleaved as a signal peptide; it reads MKRELLCVLLLCGLAFP. The propeptide occupies 18–29; that stretch reads LPDQGIHGRFRR. Positions 30–32 are cleaved as a propeptide — removed by plasmin; the sequence is GAR. The 43-residue stretch at 36-78 folds into the Fibronectin type-I domain; that stretch reads ATCRDEPTQTTYQQHQSWLRPMLRSSRVEYCRCNSGLVQCHSV. 17 cysteine pairs are disulfide-bonded: cysteine 38/cysteine 68, cysteine 66/cysteine 75, cysteine 83/cysteine 94, cysteine 88/cysteine 105, cysteine 107/cysteine 116, cysteine 124/cysteine 205, cysteine 145/cysteine 187, cysteine 176/cysteine 200, cysteine 213/cysteine 294, cysteine 234/cysteine 276, cysteine 265/cysteine 289, cysteine 297/cysteine 428, cysteine 340/cysteine 356, cysteine 348/cysteine 417, cysteine 442/cysteine 516, cysteine 474/cysteine 490, and cysteine 506/cysteine 534. An important for binding to annexin A2 region spans residues 39–49; it reads RDEPTQTTYQQ. The region spanning 79-117 is the EGF-like domain; the sequence is PVRSCSEPRCFNGGTCQQALYFSDFVCQCPDGFVGKRCD. Kringle domains are found at residues 124–205 and 213–294; these read CFEE…TPAC and CYVG…MSPC. Residue asparagine 149 is glycosylated (N-linked (GlcNAc...) asparagine). One can recognise a Peptidase S1 domain in the interval 309–558; it reads IKGGLYTDIT…YLDWIHDNMK (250 aa). Active-site charge relay system residues include histidine 355 and aspartate 404. A glycan (N-linked (GlcNAc...) asparagine) is linked at asparagine 481. The active-site Charge relay system is serine 510.

This sequence belongs to the peptidase S1 family. Heterodimer of chain A and chain B held by a disulfide bond. Binds to fibrin with high affinity. This interaction leads to an increase in the catalytic efficiency of the enzyme due to an increase in affinity for plasminogen. Similarly, binding to heparin increases the activation of plasminogen. Binds to annexin A2, cytokeratin-8, fibronectin and laminin. Binds to mannose receptor and the low-density lipoprotein receptor-related protein (LRP1); these proteins are involved in TPA clearance. Binds LRP1B; binding is followed by internalization and degradation. Forms heterodimer with SERPINA5. Interacts with SERPINE1. In complex with SERPINE1, interacts with SORL1. In terms of processing, the single chain, almost fully active enzyme, can be further processed into a two-chain fully active form by a cleavage after Arg-308 catalyzed by plasmin, tissue kallikrein or factor Xa.

The protein localises to the secreted. Its subcellular location is the extracellular space. It carries out the reaction Specific cleavage of Arg-|-Val bond in plasminogen to form plasmin.. Inhibited by SERPINA5. Inhibited by SERPINE1. In terms of biological role, converts the abundant, but inactive, zymogen plasminogen to plasmin by hydrolyzing a single Arg-Val bond in plasminogen. By controlling plasmin-mediated proteolysis, it plays an important role in tissue remodeling and degradation, in cell migration and many other physiopathological events. During oocyte activation, plays a role in cortical granule reaction in the zona reaction, which contributes to the block to polyspermy. The protein is Tissue-type plasminogen activator (Plat) of Mus musculus (Mouse).